The following is a 494-amino-acid chain: MAENQTTAAPETAAEPTAGRVTRIQGSVIDVEFPVGHLPDIYNALTVELANTGVHEEGETTKKITLEVEQHLGDSTVRTVALKPTDGLVRGATVYDTGGPISVPVGDVTKGHVFDVSGNILNKKADETVKVTERWPIHRNPPAFDQLESKTQMFETGIKVIDLLTPYVQGGKIGLFGGAGVGKTVLIQEMIQRVAQNHGGVSVFAGVGERTREGNDLIGEMDEAGVLEKTALVFGQMDEQPGTRLRVPLTALTMAEYFRDVQNQDVLLFIDNIFRFTQAGSEVSTLLGRMPSAVGYQPNLADEMGALQERITSTRGHSITSLQAIYVPADDYTDPAPATTFAHLDATTELSRDIASKGIYPAVDPLSSTSRILDPRYVGQAHYDCANRVKAILQRNKELQDIIALIGIDELGEEDKTTVNRARKIEQFLGQNFYVAEKFTGRPGSYVPADETIEAFTRICDGVYDDVPEQAFSGIGGIDDLEKKWHDMQKEYGA.

177–184 (GGAGVGKT) lines the ATP pocket.

Belongs to the ATPase alpha/beta chains family. As to quaternary structure, F-type ATPases have 2 components, CF(1) - the catalytic core - and CF(0) - the membrane proton channel. CF(1) has five subunits: alpha(3), beta(3), gamma(1), delta(1), epsilon(1). CF(0) has three main subunits: a(1), b(2) and c(9-12). The alpha and beta chains form an alternating ring which encloses part of the gamma chain. CF(1) is attached to CF(0) by a central stalk formed by the gamma and epsilon chains, while a peripheral stalk is formed by the delta and b chains.

It is found in the cell membrane. It catalyses the reaction ATP + H2O + 4 H(+)(in) = ADP + phosphate + 5 H(+)(out). Functionally, produces ATP from ADP in the presence of a proton gradient across the membrane. The catalytic sites are hosted primarily by the beta subunits. This Bifidobacterium adolescentis (strain ATCC 15703 / DSM 20083 / NCTC 11814 / E194a) protein is ATP synthase subunit beta.